We begin with the raw amino-acid sequence, 241 residues long: Fatty acid metabolism regulator protein (241 aa).

Residues 6–74 form the HTH gntR-type domain; that stretch reads KGPASFAEKY…HGKPTRVNNF (69 aa). Residues 34-53 constitute a DNA-binding region (H-T-H motif); the sequence is ERELSELIGVTRTTLREVLQ.

In terms of assembly, homodimer.

Its subcellular location is the cytoplasm. Functionally, multifunctional regulator of fatty acid metabolism. The polypeptide is Fatty acid metabolism regulator protein (Shewanella sp. (strain MR-4)).